A 465-amino-acid polypeptide reads, in one-letter code: Protein hedgehog (465 aa).

The N-palmitoyl cysteine moiety is linked to residue cysteine 79. Ca(2+) contacts are provided by glutamate 143, glutamate 144, aspartate 149, threonine 179, glutamate 180, aspartate 183, and aspartate 185. Glycine 251 carries the Cholesterol glycine ester lipid modification.

The protein belongs to the hedgehog family. Interacts with shf. In terms of processing, the C-terminal part of the hedgehog protein precursor displays an autoproteolysis activity that results in the cleavage of the full-length protein into two parts (N-product and C-product). In addition, the C-terminal part displays a cholesterol transferase activity that results by the covalent attachment of a cholesterol moiety to the C-terminal of the newly generated N-product. The N-product is the active species in both local and long-range signaling, whereas the C-product has no signaling activity. Post-translationally, cholesterylation is required for N-product targeting to lipid rafts and multimerization. N-palmitoylation by Rasp of the hedgehog N-product, within the secretory pathway, is required for the embryonic and larval patterning activities of the hedgehog signal.

It is found in the nucleus. Its subcellular location is the cytoplasm. The protein resides in the cell membrane. It carries out the reaction glycyl-L-cysteinyl-[protein] + cholesterol + H(+) = [protein]-C-terminal glycyl cholesterol ester + N-terminal L-cysteinyl-[protein]. In terms of biological role, the C-terminal part of the hedgehog protein precursor displays an autoproteolysis activity that results in the cleavage of the full-length protein into two parts (N-product and C-product). In addition, the C-terminal part displays a cholesterol transferase activity that results by the covalent attachment of a cholesterol moiety to the C-terminal of the newly generated N-product. Once cleaved, the C-product has no signaling activity and diffuses from the cell. Functionally, the dually lipidated hedgehog protein N-product is a morphogen which is essential for a variety of patterning events during development. Establishes the anterior-posterior axis of the embryonic segments and patterns the larval imaginal disks. Binds to the patched (ptc) receptor, which functions in association with smoothened (smo), to activate the transcription of target genes wingless (wg), decapentaplegic (dpp) and ptc. In the absence of hh, ptc represses the constitutive signaling activity of smo through fused (fu). Essential component of a signaling pathway which regulates the Duox-dependent gut immune response to bacterial uracil; required to activate Cad99C-dependent endosome formation, norpA-dependent Ca2+ mobilization and p38 MAPK, which are essential steps in the Duox-dependent production of reactive oxygen species (ROS) in response to intestinal bacterial infection. During photoreceptor differentiation, it up-regulates transcription of Ubr3, which in turn promotes the hh-signaling pathway by mediating the ubiquitination and degradation of cos. The polypeptide is Protein hedgehog (Drosophila erecta (Fruit fly)).